The sequence spans 449 residues: Tubulin beta-4 chain (449 aa).

Residues 1–4 (MREI) carry the MREI motif motif. Positions 11, 69, 138, 142, 143, 144, 204, and 226 each coordinate GTP. Mg(2+) is bound at residue Glu69. The interval 421 to 449 (EYQQYQDATAEEEGEMYEDDEEESEQGAK) is disordered. The span at 429–449 (TAEEEGEMYEDDEEESEQGAK) shows a compositional bias: acidic residues. 5-glutamyl polyglutamate is present on Glu438. Ser444 bears the Phosphoserine mark.

This sequence belongs to the tubulin family. Dimer of alpha and beta chains. A typical microtubule is a hollow water-filled tube with an outer diameter of 25 nm and an inner diameter of 15 nM. Alpha-beta heterodimers associate head-to-tail to form protofilaments running lengthwise along the microtubule wall with the beta-tubulin subunit facing the microtubule plus end conferring a structural polarity. Microtubules usually have 13 protofilaments but different protofilament numbers can be found in some organisms and specialized cells. It depends on Mg(2+) as a cofactor. Some glutamate residues at the C-terminus are polyglycylated, resulting in polyglycine chains on the gamma-carboxyl group. Glycylation is mainly limited to tubulin incorporated into axonemes (cilia and flagella) whereas glutamylation is prevalent in neuronal cells, centrioles, axonemes, and the mitotic spindle. Both modifications can coexist on the same protein on adjacent residues, and lowering polyglycylation levels increases polyglutamylation, and reciprocally. The precise function of polyglycylation is still unclear. In terms of processing, some glutamate residues at the C-terminus are polyglutamylated, resulting in polyglutamate chains on the gamma-carboxyl group. Polyglutamylation plays a key role in microtubule severing by spastin (SPAST). SPAST preferentially recognizes and acts on microtubules decorated with short polyglutamate tails: severing activity by SPAST increases as the number of glutamates per tubulin rises from one to eight, but decreases beyond this glutamylation threshold. In terms of tissue distribution, neuron specific.

Its subcellular location is the cytoplasm. It is found in the cytoskeleton. Tubulin is the major constituent of microtubules, a cylinder consisting of laterally associated linear protofilaments composed of alpha- and beta-tubulin heterodimers. Microtubules grow by the addition of GTP-tubulin dimers to the microtubule end, where a stabilizing cap forms. Below the cap, tubulin dimers are in GDP-bound state, owing to GTPase activity of alpha-tubulin. The chain is Tubulin beta-4 chain from Gallus gallus (Chicken).